A 190-amino-acid polypeptide reads, in one-letter code: Cypemycin cysteine dehydrogenase (decarboxylating) (190 aa).

This sequence belongs to the HFCD (homooligomeric flavin containing Cys decarboxylase) superfamily.

The catalysed reaction is [cypemycin](1-18)-L-Cys-L-Leu-L-Val-L-Cys + A = C(3,19),S(21)-[cypemycin](1-18)-L-Ala-L-Leu-N-thioethenyl-L-valinamide + hydrogen sulfide + AH2 + CO2. In terms of biological role, involved in the biosynthesis of the lanaridin cypemycin. This is Cypemycin cysteine dehydrogenase (decarboxylating) from Streptomyces sp.